The primary structure comprises 140 residues: uncharacterized protein (140 aa).

Residues 21–42 form a C2H2-type zinc finger; the sequence is CPYCNYTNADVKAIKKHIKSKH.

To M.jannaschii MJECL27.

This is an uncharacterized protein from Methanocaldococcus jannaschii (strain ATCC 43067 / DSM 2661 / JAL-1 / JCM 10045 / NBRC 100440) (Methanococcus jannaschii).